We begin with the raw amino-acid sequence, 619 residues long: MEMRSAKLMNGRVFAGARALYRAAGVDGKDFGKPIIAIANSFDEFLPGHVHLNKVGRLISDAIKEAGGIPREFNTMAVDDGIAMGHTGMLYSLPSRDIIADTVEYQVNAHCADALICIPNCDKVVPGMLMAALRLNIPTVFVSGGPMEAGTTVLPDGTVKKNTDLIDVMYASADDNLNEEDLLAYEKTVCPTCGSCAGMFTANSMNCLTEAIGLALPGNGTILASHSYRKDLFKRAAEQVVKIAKQYYDDDDDSVLPRSIATKKAFENAMTMDVAMGGSTNTVLHILAMAQSADVDFTLDDIERISHTVPCICKASPSGEWEISDVHRAGGITGILGELDRAGKLHRDVHSIDYKSLEDKLNDWDIMRDTCTEEAKQMYLAAPGHIVSPEPWTHTTLFDSLDRDRVNGAIHDIDHPAVTEGGLAVLRGNLAPDGCVVKTAGVPKEIWTFRGPALVVESQEQAIEVILNDTLKPGMALVIRYEGPKGGPGMQEMLYPTSFVKGKGIGKQVAMLTDGRYSGGSSGLAIGHIAPEAANKGPIALIKNGDIINIDIPNRTVNVELSDEELAQRRAELEAGDGYVAHRDRKVSQALKAYAAFARSADKGATRDPELIDKLSGLA.

Aspartate 80 provides a ligand contact to Mg(2+). Cysteine 121 serves as a coordination point for [2Fe-2S] cluster. Mg(2+)-binding residues include aspartate 122 and lysine 123. Residue lysine 123 is modified to N6-carboxylysine. Cysteine 196 provides a ligand contact to [2Fe-2S] cluster. Glutamate 492 contributes to the Mg(2+) binding site. The Proton acceptor role is filled by serine 518.

This sequence belongs to the IlvD/Edd family. In terms of assembly, homodimer. The cofactor is [2Fe-2S] cluster. Mg(2+) is required as a cofactor.

It catalyses the reaction (2R)-2,3-dihydroxy-3-methylbutanoate = 3-methyl-2-oxobutanoate + H2O. It carries out the reaction (2R,3R)-2,3-dihydroxy-3-methylpentanoate = (S)-3-methyl-2-oxopentanoate + H2O. It participates in amino-acid biosynthesis; L-isoleucine biosynthesis; L-isoleucine from 2-oxobutanoate: step 3/4. The protein operates within amino-acid biosynthesis; L-valine biosynthesis; L-valine from pyruvate: step 3/4. Its function is as follows. Functions in the biosynthesis of branched-chain amino acids. Catalyzes the dehydration of (2R,3R)-2,3-dihydroxy-3-methylpentanoate (2,3-dihydroxy-3-methylvalerate) into 2-oxo-3-methylpentanoate (2-oxo-3-methylvalerate) and of (2R)-2,3-dihydroxy-3-methylbutanoate (2,3-dihydroxyisovalerate) into 2-oxo-3-methylbutanoate (2-oxoisovalerate), the penultimate precursor to L-isoleucine and L-valine, respectively. The sequence is that of Dihydroxy-acid dehydratase from Bifidobacterium adolescentis (strain ATCC 15703 / DSM 20083 / NCTC 11814 / E194a).